The following is a 514-amino-acid chain: Uronyl 2-sulfotransferase homolog pip (514 aa).

The Cytoplasmic portion of the chain corresponds to 1-30 (MSLNAERSYKMKLRDVENAFKYRRIPYPKR). The helical; Signal-anchor for type II membrane protein transmembrane segment at 31–50 (SVELIALLAISCTFFLFMHT) threads the bilayer. Residues 51–514 (NKLNSRLKEM…EQQNEYNEDY (464 aa)) lie on the Lumenal side of the membrane. The span at 112–121 (HDRRSSEEQL) shows a compositional bias: basic and acidic residues. Residues 112–185 (HDRRSSEEQL…DEDEVEENDD (74 aa)) form a disordered region. Positions 127–140 (HGHHHDHHSHHHHM) are enriched in basic residues. The segment covering 155–170 (HDKQLAVPDNKHKEDE) has biased composition (basic and acidic residues). The span at 171 to 185 (VHYEDDEDEVEENDD) shows a compositional bias: acidic residues. N207 is a glycosylation site (N-linked (GlcNAc...) asparagine). H282 is an active-site residue. N-linked (GlcNAc...) asparagine glycans are attached at residues N287, N416, N451, and N467.

This sequence belongs to the sulfotransferase 3 family. In terms of assembly, interacts with wbl/windbeutel; the interaction is direct and does not require pip to be folded. In terms of tissue distribution, ovary-specific. Specifically expressed in the ventral follicle cells of stage 9-10 egg chambers. Expressed in ovaries. Specifically expressed in the ventral follicle cells of stage 9-10 egg chambers.

It is found in the golgi apparatus membrane. Functionally, sulfotransferase involved in dorsoventral axis patterning in early embryos. Required for the ventral activation of ea/easter by the protease snk in the perivitelline space between the embryonic membrane and the eggshell; activation of ea requires both activation of the ndl-gd-snk protease cascade and sulfation of a vitelline membrane component by pip. Probably acts by mediating the sulfation of some glycoprotein or glycosaminoglycan stably deposited in the vitelline membrane, whose ventrally localized modification leads to spatially restricted activation of the protease cascade resulting in localized activation of the spz Toll receptor ligand by ea. In terms of biological role, probably required redundantly with isoform H for dorsoventral axis patterning in embryos. Lacks 2-O-sulfotransferase activity towards completely desulfated N-sulfated (CDSNS) heparin, chondroitin, and chondroitin sulfate A, B (dermatan sulfate), and C. Sulfates several components of the eggshell vitelline membrane, including Vml, Vm26Aa, Vm32E and psd/palisade/Fcp26Aa. Probably required redundantly with isoform A for dorsoventral axis patterning in embryos. Its function is as follows. Lacks 2-O-sulfotransferase activity towards CDSNS heparin, chondroitin, and chondroitin sulfate A, B (dermatan sulfate), and C. The sequence is that of Uronyl 2-sulfotransferase homolog pip from Drosophila melanogaster (Fruit fly).